Consider the following 463-residue polypeptide: Elongation factor 1-alpha (463 aa).

Residues 5–242 (KVHINIVVIG…DSIIPPQRPT (238 aa)) form the tr-type G domain. Residues 14–21 (GHVDSGKS) are G1. 14–21 (GHVDSGKS) contributes to the GTP binding site. Residues 70 to 74 (GITID) form a G2 region. Positions 91-94 (DAPG) are G3. Residues 91–95 (DAPGH) and 153–156 (NKMD) each bind GTP. The interval 153 to 156 (NKMD) is G4. Residues 194 to 196 (SGF) are G5. 5-glutamyl glycerylphosphorylethanolamine is present on residues Glu-301 and Glu-374. The disordered stretch occupies residues 443-463 (KSDGSSGKVTKSAQKAAPKKK). Positions 446 to 455 (GSSGKVTKSA) are enriched in polar residues.

This sequence belongs to the TRAFAC class translation factor GTPase superfamily. Classic translation factor GTPase family. EF-Tu/EF-1A subfamily.

The protein resides in the cytoplasm. Its function is as follows. This protein promotes the GTP-dependent binding of aminoacyl-tRNA to the A-site of ribosomes during protein biosynthesis. This Caenorhabditis elegans protein is Elongation factor 1-alpha.